A 136-amino-acid chain; its full sequence is ATP synthase epsilon chain 2 (136 aa).

The protein belongs to the ATPase epsilon chain family. As to quaternary structure, F-type ATPases have 2 components, CF(1) - the catalytic core - and CF(0) - the membrane proton channel. CF(1) has five subunits: alpha(3), beta(3), gamma(1), delta(1), epsilon(1). CF(0) has three main subunits: a, b and c.

Its subcellular location is the cell inner membrane. Its function is as follows. Produces ATP from ADP in the presence of a proton gradient across the membrane. This is ATP synthase epsilon chain 2 from Nitrobacter hamburgensis (strain DSM 10229 / NCIMB 13809 / X14).